The sequence spans 711 residues: DNA topoisomerase 3 (711 aa).

The region spanning 2–135 (KSLILAEKPS…IRRLWISSVT (134 aa)) is the Toprim domain. Residues E8 and D104 each coordinate Mg(2+). Positions 152-580 (YNDLYYAALA…EMKDFTKDVV (429 aa)) constitute a Topo IA-type catalytic domain. The interaction with DNA stretch occupies residues 186–191 (SLGRVQ). The active-site O-(5'-phospho-DNA)-tyrosine intermediate is the Y305. The interval 691–711 (MNKNEGLDNNPFKDALKNLNL) is disordered.

It belongs to the type IA topoisomerase family. Mg(2+) serves as cofactor.

It carries out the reaction ATP-independent breakage of single-stranded DNA, followed by passage and rejoining.. Functionally, releases the supercoiling and torsional tension of DNA, which is introduced during the DNA replication and transcription, by transiently cleaving and rejoining one strand of the DNA duplex. Introduces a single-strand break via transesterification at a target site in duplex DNA. The scissile phosphodiester is attacked by the catalytic tyrosine of the enzyme, resulting in the formation of a DNA-(5'-phosphotyrosyl)-enzyme intermediate and the expulsion of a 3'-OH DNA strand. The free DNA strand then undergoes passage around the unbroken strand, thus removing DNA supercoils. Finally, in the religation step, the DNA 3'-OH attacks the covalent intermediate to expel the active-site tyrosine and restore the DNA phosphodiester backbone. This is DNA topoisomerase 3 from Staphylococcus aureus (strain NCTC 8325 / PS 47).